Here is a 195-residue protein sequence, read N- to C-terminus: Imidazoleglycerol-phosphate dehydratase (195 aa).

Belongs to the imidazoleglycerol-phosphate dehydratase family.

It localises to the cytoplasm. It carries out the reaction D-erythro-1-(imidazol-4-yl)glycerol 3-phosphate = 3-(imidazol-4-yl)-2-oxopropyl phosphate + H2O. Its pathway is amino-acid biosynthesis; L-histidine biosynthesis; L-histidine from 5-phospho-alpha-D-ribose 1-diphosphate: step 6/9. The protein is Imidazoleglycerol-phosphate dehydratase of Acetivibrio thermocellus (strain ATCC 27405 / DSM 1237 / JCM 9322 / NBRC 103400 / NCIMB 10682 / NRRL B-4536 / VPI 7372) (Clostridium thermocellum).